We begin with the raw amino-acid sequence, 294 residues long: Survival motor neuron protein (294 aa).

Residues 1–10 (MAMSSGGSGS) are compositionally biased toward gly residues. The disordered stretch occupies residues 1–32 (MAMSSGGSGSGVPEQEDAVLFRRGTGQSDDSD). A2 bears the N-acetylalanine mark. A phosphoserine; by PKA mark is found at S4, S5, and S8. Positions 13–44 (PEQEDAVLFRRGTGQSDDSDIWDDTALIKAYD) are P1 (binding site for GEMIN2). A Phosphothreonine modification is found at T25. Phosphoserine is present on residues S28 and S31. Residue K51 forms a Glycyl lysine isopeptide (Lys-Gly) (interchain with G-Cter in SUMO2) linkage. The interval 60–88 (CETSGKSKTTPKRKPAKKNKSQKKNTAAS) is disordered. Over residues 68 to 82 (TTPKRKPAKKNKSQK) the composition is skewed to basic residues. T69 is subject to Phosphothreonine. At T85 the chain carries Phosphothreonine; by PKA. Residues 91–151 (QWKVGDKCSA…LSPICEVANN (61 aa)) form the Tudor domain. The tract at residues 97 to 209 (KCSAIWSEDG…MPGPRLGPGK (113 aa)) is required for interaction with RPP20/POP7. Low complexity predominate over residues 156–166 (AQENENESQVS). Positions 156–222 (AQENENESQV…KFNGPPPPPP (67 aa)) are disordered. S187 is subject to Phosphoserine; by PKA. Residues 194-204 (LPPPPPMPGPR) show a composition bias toward pro residues. Residues 206–215 (GPGKPGLKFN) are compositionally biased toward low complexity. Residue K209 forms a Glycyl lysine isopeptide (Lys-Gly) (interchain with G-Cter in SUMO2) linkage. Residues 240-267 (PPIIPPPPPICPDSLDDADALGSMLISW) are P2 (binding site for SM B). A required for interaction with SYNCRIP region spans residues 279–294 (GFRQNQKEGRCSHSLN).

The protein belongs to the SMN family. In terms of assembly, homooligomer; may form higher order homooligomers in the dimer to octamer range. Part of the core SMN complex that contains SMN1, GEMIN2/SIP1, DDX20/GEMIN3, GEMIN4, GEMIN5, GEMIN6, GEMIN7, GEMIN8 and STRAP/UNRIP. Part of the SMN-Sm complex that contains SMN1, GEMIN2/SIP1, DDX20/GEMIN3, GEMIN4, GEMIN5, GEMIN6, GEMIN7, GEMIN8, STRAP/UNRIP and the Sm proteins SNRPB, SNRPD1, SNRPD2, SNRPD3, SNRPE, SNRPF and SNRPG. Component of an import snRNP complex composed of KPNB1, RNUT1, SMN1 and ZNF259. Interacts with DDX20, FBL, NOLA1, RNUT1, SYNCRIP and with several spliceosomal snRNP core Sm proteins, including SNRPB, SNRPD1, SNRPD2, SNRPD3, SNRPE and ILF3. Interacts with GEMIN2; the interaction is direct. Interacts with GEMIN3; the interaction is direct. Interacts with GEMIN8; the interaction is direct. Interacts with SNRPB; the interaction is direct. Interacts (via Tudor domain) with SNRPD1 (via C-terminus); the interaction is direct. Interacts with SNRPD2; the interaction is direct. Interacts (via Tudor domain) with SNRPD3 (via C-terminus); the interaction is direct. Interacts with SNRPE; the interaction is direct. Interacts with OSTF1, LSM10, LSM11 and RPP20/POP7. Interacts (via C-terminal region) with ZPR1 (via C-terminal region). Interacts (via Tudor domain) with COIL. Interacts with SETX; recruits SETX to POLR2A. Interacts with POLR2A (via the C-terminal domain (CTD)). Interacts with PRMT5. Interacts with XRN2. Interacts (via C-terminus) with FMR1 (via C-terminus); the interaction is direct and occurs in a RNA-independent manner. Interacts (via Tudor domain) with SF3B2 ('Arg-508'-methylated form). Interacts with WRAP53/TCAB1. Interacts (via Tudor domain) with ELAVL4 in an RNA-independent manner; the interaction is required for localization of ELAVL4 to RNA granules. Interacts with FRG1.

It localises to the nucleus. The protein localises to the gem. Its subcellular location is the cajal body. It is found in the cytoplasm. The protein resides in the cytoplasmic granule. It localises to the perikaryon. The protein localises to the cell projection. Its subcellular location is the neuron projection. It is found in the axon. The protein resides in the myofibril. It localises to the sarcomere. The protein localises to the z line. Functionally, the SMN complex catalyzes the assembly of small nuclear ribonucleoproteins (snRNPs), the building blocks of the spliceosome, and thereby plays an important role in the splicing of cellular pre-mRNAs. Most spliceosomal snRNPs contain a common set of Sm proteins SNRPB, SNRPD1, SNRPD2, SNRPD3, SNRPE, SNRPF and SNRPG that assemble in a heptameric protein ring on the Sm site of the small nuclear RNA to form the core snRNP (Sm core). In the cytosol, the Sm proteins SNRPD1, SNRPD2, SNRPE, SNRPF and SNRPG are trapped in an inactive 6S pICln-Sm complex by the chaperone CLNS1A that controls the assembly of the core snRNP. To assemble core snRNPs, the SMN complex accepts the trapped 5Sm proteins from CLNS1A forming an intermediate. Binding of snRNA inside 5Sm ultimately triggers eviction of the SMN complex, thereby allowing binding of SNRPD3 and SNRPB to complete assembly of the core snRNP. Within the SMN complex, SMN1 acts as a structural backbone and together with GEMIN2 it gathers the Sm complex subunits. Ensures the correct splicing of U12 intron-containing genes that may be important for normal motor and proprioceptive neurons development. Also required for resolving RNA-DNA hybrids created by RNA polymerase II, that form R-loop in transcription terminal regions, an important step in proper transcription termination. May also play a role in the metabolism of small nucleolar ribonucleoprotein (snoRNPs). This is Survival motor neuron protein (SMN1) from Pongo abelii (Sumatran orangutan).